The chain runs to 547 residues: Sesterfisheric acid synthase (547 aa).

The chain crosses the membrane as a helical span at residues 19 to 39 (IMGCSLGTGLLVSMIIYNYFF). N-linked (GlcNAc...) asparagine glycans are attached at residues Asn341 and Asn404. Residue Cys490 coordinates heme.

The protein belongs to the cytochrome P450 family. The cofactor is heme.

It is found in the membrane. The catalysed reaction is sesterfisherol + 3 reduced [NADPH--hemoprotein reductase] + 3 O2 = sesterfisherate + 3 oxidized [NADPH--hemoprotein reductase] + 4 H2O + 4 H(+). Its pathway is secondary metabolite biosynthesis; terpenoid biosynthesis. Cytochrome P450 monooxygenase; part of the gene cluster that mediates the biosynthesis of sesterfisheric acid. The bifunctional terpene synthase NfSS converts DMAPP and IPP, and also GGPP, into sesterfisherol. The C-terminal prenyltransferase (PT) domain of NfSS catalyzes formation of GFPP, whereas the N-terminal terpene cyclase (TC) domain catalyzes the cyclization of GFPP to sesterfisherol. The cytochrome P450 monooxygenase NfP450 then catalyzes oxidative modifications of sesterfisherol into sesterfisheric acid. This Neosartorya fischeri (strain ATCC 1020 / DSM 3700 / CBS 544.65 / FGSC A1164 / JCM 1740 / NRRL 181 / WB 181) (Aspergillus fischerianus) protein is Sesterfisheric acid synthase.